A 337-amino-acid chain; its full sequence is ATP-dependent 6-phosphofructokinase (337 aa).

G11 serves as a coordination point for ATP. 21-25 (RAVVR) contributes to the ADP binding site. ATP contacts are provided by residues 72 to 73 (RY) and 102 to 105 (GDGS). D103 contributes to the Mg(2+) binding site. Residue 125–127 (TID) participates in substrate binding. D127 functions as the Proton acceptor in the catalytic mechanism. Position 154 (R154) interacts with ADP. Substrate-binding positions include R162 and 169–171 (MGR). Residues 185 to 187 (GAD) and 214 to 216 (KNH) each bind ADP. Substrate is bound by residues E223, R245, and 251–254 (HILR).

This sequence belongs to the phosphofructokinase type A (PFKA) family. ATP-dependent PFK group I subfamily. Prokaryotic clade 'B1' sub-subfamily. Homotetramer. Mg(2+) serves as cofactor.

Its subcellular location is the cytoplasm. It catalyses the reaction beta-D-fructose 6-phosphate + ATP = beta-D-fructose 1,6-bisphosphate + ADP + H(+). It participates in carbohydrate degradation; glycolysis; D-glyceraldehyde 3-phosphate and glycerone phosphate from D-glucose: step 3/4. With respect to regulation, allosterically activated by ADP and other diphosphonucleosides, and allosterically inhibited by phosphoenolpyruvate. Its function is as follows. Catalyzes the phosphorylation of D-fructose 6-phosphate to fructose 1,6-bisphosphate by ATP, the first committing step of glycolysis. In Streptococcus uberis (strain ATCC BAA-854 / 0140J), this protein is ATP-dependent 6-phosphofructokinase.